Consider the following 78-residue polypeptide: Polcalcin Phl p 7 (78 aa).

2 EF-hand domains span residues 1–35 (MADDMERIFKRFDTNGDGKISLSELTDALRTLGST) and 35–70 (TSADEVQRMMAEIDTDGDGFIDFNEFISFCNANPGL). The Ca(2+) site is built by Asp-13, Asn-15, Asp-17, Lys-19, Glu-24, Asp-48, Asp-50, Asp-52, and Glu-59.

In terms of assembly, monomer. In terms of tissue distribution, specifically expressed in pollen.

Functionally, may be involved in the regulation of pollen-tube growth. The chain is Polcalcin Phl p 7 from Phleum pratense (Common timothy).